The sequence spans 87 residues: Small ribosomal subunit protein uS17 (87 aa).

Belongs to the universal ribosomal protein uS17 family. As to quaternary structure, part of the 30S ribosomal subunit.

In terms of biological role, one of the primary rRNA binding proteins, it binds specifically to the 5'-end of 16S ribosomal RNA. The protein is Small ribosomal subunit protein uS17 of Thioalkalivibrio sulfidiphilus (strain HL-EbGR7).